A 487-amino-acid polypeptide reads, in one-letter code: GPI mannosyltransferase 1 (487 aa).

Transmembrane regions (helical) follow at residues proline 26–tryptophan 46, isoleucine 87–alanine 107, and valine 121–glycine 141. The disordered stretch occupies residues serine 147–methionine 175. The segment covering lysine 150 to lysine 164 has biased composition (basic and acidic residues). 7 helical membrane passes run leucine 205–alanine 225, leucine 227–valine 247, leucine 289–leucine 309, isoleucine 359–leucine 379, phenylalanine 393–leucine 413, methionine 429–tyrosine 449, and glycine 462–valine 482.

It belongs to the PIGM family.

The protein localises to the endoplasmic reticulum membrane. Its pathway is glycolipid biosynthesis; glycosylphosphatidylinositol-anchor biosynthesis. Mannosyltransferase involved in glycosylphosphatidylinositol-anchor biosynthesis. Transfers the first alpha-1,4-mannose to GlcN-acyl-PI during GPI precursor assembly. Required for cell wall integrity. This is GPI mannosyltransferase 1 (gim-1) from Neurospora crassa (strain ATCC 24698 / 74-OR23-1A / CBS 708.71 / DSM 1257 / FGSC 987).